The following is a 331-amino-acid chain: Ketol-acid reductoisomerase (NADP(+)) (331 aa).

The KARI N-terminal Rossmann domain occupies 2–182 (AKMYYDKDAD…GGTRAGVIET (181 aa)). Residues 25–28 (FGSQ), Ser51, Ser53, and 83–86 (DEKQ) contribute to the NADP(+) site. The active site involves His108. Position 134 (Gly134) interacts with NADP(+). The 146-residue stretch at 183–328 (TFKEETETDL…KGLREMMAWI (146 aa)) folds into the KARI C-terminal knotted domain. Residues Asp191, Glu195, Glu227, and Glu231 each contribute to the Mg(2+) site. Ser252 contributes to the substrate binding site.

Belongs to the ketol-acid reductoisomerase family. It depends on Mg(2+) as a cofactor.

The enzyme catalyses (2R)-2,3-dihydroxy-3-methylbutanoate + NADP(+) = (2S)-2-acetolactate + NADPH + H(+). It catalyses the reaction (2R,3R)-2,3-dihydroxy-3-methylpentanoate + NADP(+) = (S)-2-ethyl-2-hydroxy-3-oxobutanoate + NADPH + H(+). It participates in amino-acid biosynthesis; L-isoleucine biosynthesis; L-isoleucine from 2-oxobutanoate: step 2/4. It functions in the pathway amino-acid biosynthesis; L-valine biosynthesis; L-valine from pyruvate: step 2/4. Its function is as follows. Involved in the biosynthesis of branched-chain amino acids (BCAA). Catalyzes an alkyl-migration followed by a ketol-acid reduction of (S)-2-acetolactate (S2AL) to yield (R)-2,3-dihydroxy-isovalerate. In the isomerase reaction, S2AL is rearranged via a Mg-dependent methyl migration to produce 3-hydroxy-3-methyl-2-ketobutyrate (HMKB). In the reductase reaction, this 2-ketoacid undergoes a metal-dependent reduction by NADPH to yield (R)-2,3-dihydroxy-isovalerate. The polypeptide is Ketol-acid reductoisomerase (NADP(+)) (Thermoanaerobacter pseudethanolicus (strain ATCC 33223 / 39E) (Clostridium thermohydrosulfuricum)).